Consider the following 131-residue polypeptide: Small ribosomal subunit protein uS10m (131 aa).

The protein belongs to the universal ribosomal protein uS10 family.

It is found in the mitochondrion. The protein is Small ribosomal subunit protein uS10m (mrps10) of Dictyostelium discoideum (Social amoeba).